We begin with the raw amino-acid sequence, 485 residues long: Serine/threonine-protein kinase dst4 (485 aa).

A Protein kinase domain is found at 21-278 (FRVLEVIGQG…AVDLLNHPFI (258 aa)). ATP is bound by residues 27-35 (IGQGSFGVV) and Lys50. Asp142 functions as the Proton acceptor in the catalytic mechanism. Disordered stretches follow at residues 304–343 (RRKKAEEEEAEEAEEGDDYDDVNGGGDERQHGSSVSSAGL), 360–424 (VMRE…GSVV), and 436–485 (SMKL…NQDD). A compositionally biased stretch (acidic residues) spans 310–324 (EEEAEEAEEGDDYDD). Residues 370-393 (SNNGGTFIYNNNNNNSSKTSSSGT) are compositionally biased toward low complexity. Composition is skewed to acidic residues over residues 406–417 (DDDDDDDIEEGG) and 450–468 (SSDEEDEEDEDDEDDEEGG). Over residues 474-485 (VVYTKSPVNQDD) the composition is skewed to polar residues.

The protein belongs to the protein kinase superfamily. STE Ser/Thr protein kinase family. STE20 subfamily. The cofactor is Mg(2+).

It carries out the reaction L-seryl-[protein] + ATP = O-phospho-L-seryl-[protein] + ADP + H(+). It catalyses the reaction L-threonyl-[protein] + ATP = O-phospho-L-threonyl-[protein] + ADP + H(+). The polypeptide is Serine/threonine-protein kinase dst4 (Dictyostelium discoideum (Social amoeba)).